The chain runs to 474 residues: Trehalose-6-phosphate synthase (474 aa).

R10 is a D-glucose 6-phosphate binding site. 22–23 (GG) is a UDP-alpha-D-glucose binding site. Y77 and D131 together coordinate D-glucose 6-phosphate. Positions 263 and 268 each coordinate UDP-alpha-D-glucose. R301 contributes to the D-glucose 6-phosphate binding site. Residues F340 and 366-370 (LVAKE) each bind UDP-alpha-D-glucose.

Belongs to the glycosyltransferase 20 family. In terms of assembly, homotetramer.

The enzyme catalyses D-glucose 6-phosphate + UDP-alpha-D-glucose = alpha,alpha-trehalose 6-phosphate + UDP + H(+). It functions in the pathway glycan biosynthesis; trehalose biosynthesis. Functionally, probably involved in the osmoprotection via the biosynthesis of trehalose. Catalyzes the transfer of glucose from UDP-alpha-D-glucose (UDP-Glc) to D-glucose 6-phosphate (Glc-6-P) to form trehalose-6-phosphate. Acts with retention of the anomeric configuration of the UDP-sugar donor. The protein is Trehalose-6-phosphate synthase of Shigella dysenteriae serotype 1 (strain Sd197).